Reading from the N-terminus, the 296-residue chain is NAD kinase (296 aa).

D73 (proton acceptor) is an active-site residue. NAD(+) is bound by residues 73-74 (DG), K78, 151-152 (NE), R178, D180, and 191-196 (TAHAMS).

It belongs to the NAD kinase family. Requires a divalent metal cation as cofactor.

The protein localises to the cytoplasm. It catalyses the reaction NAD(+) + ATP = ADP + NADP(+) + H(+). Its function is as follows. Involved in the regulation of the intracellular balance of NAD and NADP, and is a key enzyme in the biosynthesis of NADP. Catalyzes specifically the phosphorylation on 2'-hydroxyl of the adenosine moiety of NAD to yield NADP. The sequence is that of NAD kinase from Francisella tularensis subsp. novicida (strain U112).